Consider the following 205-residue polypeptide: Probable calcium-binding protein CML41 (205 aa).

Residues 26–55 (SFQNRRRSPKSNSSSTLNSPRSNSDDNNNI) are disordered. Residues 35-54 (KSNSSSTLNSPRSNSDDNNN) are compositionally biased toward low complexity. EF-hand domains are found at residues 60-95 (ASKE…VGEY), 96-131 (ISHE…RDLY), 137-173 (DGDG…LGES), and 174-205 (RTYG…MMTV). Residues Asp-73, Asp-75, Asp-77, Lys-79, Glu-84, Asp-109, Asp-111, Asp-113, Ser-115, and Asp-120 each coordinate Ca(2+). The Ca(2+) site is built by Asp-187, Asp-189, Asn-191, and Glu-198.

Its function is as follows. Potential calcium sensor. This chain is Probable calcium-binding protein CML41 (CML41), found in Arabidopsis thaliana (Mouse-ear cress).